The chain runs to 103 residues: Protein FMC1 homolog (103 aa).

The protein belongs to the FMC1 family.

The chain is Protein FMC1 homolog from Nematostella vectensis (Starlet sea anemone).